The following is a 233-amino-acid chain: tRNA (guanine-N(7)-)-methyltransferase (233 aa).

E62, E87, D116, and D138 together coordinate S-adenosyl-L-methionine. Residue D138 is part of the active site. Substrate contacts are provided by residues K142, D174, and T212–E215.

Belongs to the class I-like SAM-binding methyltransferase superfamily. TrmB family.

It carries out the reaction guanosine(46) in tRNA + S-adenosyl-L-methionine = N(7)-methylguanosine(46) in tRNA + S-adenosyl-L-homocysteine. It functions in the pathway tRNA modification; N(7)-methylguanine-tRNA biosynthesis. In terms of biological role, catalyzes the formation of N(7)-methylguanine at position 46 (m7G46) in tRNA. The sequence is that of tRNA (guanine-N(7)-)-methyltransferase from Bartonella quintana (strain Toulouse) (Rochalimaea quintana).